The primary structure comprises 1379 residues: DNA-directed RNA polymerase subunit beta'' (1379 aa).

Cys-220, Cys-293, Cys-300, and Cys-303 together coordinate Zn(2+).

It belongs to the RNA polymerase beta' chain family. RpoC2 subfamily. As to quaternary structure, in plastids the minimal PEP RNA polymerase catalytic core is composed of four subunits: alpha, beta, beta', and beta''. When a (nuclear-encoded) sigma factor is associated with the core the holoenzyme is formed, which can initiate transcription. Zn(2+) serves as cofactor.

It is found in the plastid. The protein resides in the chloroplast. The catalysed reaction is RNA(n) + a ribonucleoside 5'-triphosphate = RNA(n+1) + diphosphate. DNA-dependent RNA polymerase catalyzes the transcription of DNA into RNA using the four ribonucleoside triphosphates as substrates. In Crucihimalaya wallichii (Rock-cress), this protein is DNA-directed RNA polymerase subunit beta''.